Reading from the N-terminus, the 397-residue chain is Odorant receptor 22a (397 aa).

Residues 1-49 lie on the Cytoplasmic side of the membrane; the sequence is MLSKFFPHIKEKPLSERVKSRDAFIYLDRVMWSFGWTEPENKRWILPYK. A helical membrane pass occupies residues 50-70; sequence LWLAFVNIVMLILLPISISIE. At 71–86 the chain is on the extracellular side; it reads YLHRFKTFSAGEFLSS. The helical transmembrane segment at 87 to 107 threads the bilayer; that stretch reads LEIGVNMYGSSFKCAFTLIGF. Residues 108 to 136 are Cytoplasmic-facing; it reads KKRQEAKVLLDQLDKRCLSDKERSTVHRY. A helical membrane pass occupies residues 137-157; that stretch reads VAMGNFFDILYHIFYSTFVVM. Over 158 to 182 the chain is Extracellular; it reads NFPYFLLERRHAWRMYFPYIDSDEQ. Residues 183 to 203 traverse the membrane as a helical segment; that stretch reads FYISSIAECFLMTEAIYMDLC. The Cytoplasmic portion of the chain corresponds to 204–263; sequence TDVCPLISMLMARCHISLLKQRLRNLRSKPGRTEDEYLEELTECIRDHRLLLDYVDALRP. A helical membrane pass occupies residues 264-280; the sequence is VFSGTIFVQFLLIGTVL. Residues 281 to 286 lie on the Extracellular side of the membrane; the sequence is GLSMIN. The chain crosses the membrane as a helical span at residues 287–304; it reads LMFFSTFWTGVATCLFMF. Topologically, residues 305 to 356 are cytoplasmic; it reads DVSMETFPFCYLCNMIIDDCQEMSNCLFQSDWTSADRRYKSTLVYFLHNLQQ. The chain crosses the membrane as a helical span at residues 357 to 377; it reads PITLTAGGVFPISMQTNLAMV. Residues 378-397 lie on the Extracellular side of the membrane; the sequence is KLAFSVVTVIKQFNLAERFQ.

This sequence belongs to the insect chemoreceptor superfamily. Heteromeric odorant receptor channel (TC 1.A.69) family. Or2a subfamily. As to quaternary structure, interacts with Orco, via conserved C-terminal cytoplasmic loops. Complexes exist early in the endomembrane system in olfactory sensory neurons (OSNs), coupling these complexes to the conserved ciliary trafficking pathway. Interacts with snmp1. In terms of tissue distribution, expressed with Orco in 17-20 sensory neurons on the medial-proximal edge of the antenna. Expressed in the ab3A neuron which responds to ethyl butyrate.

It localises to the cell membrane. In terms of biological role, odorant receptor which mediates acceptance or avoidance behavior, depending on its substrates. The odorant receptor repertoire encodes a large collection of odor stimuli that vary widely in identity, intensity, and duration. Involved in the behavioral responses ethyl butyrate and to esters in more general. Complexes with Orco to form odorant-sensing units, providing sensitive and prolonged odorant signaling and calcium permeability. They are necessary and sufficient to promote functional reconstitution of odor-evoked signaling in sensory neurons that normally respond only to carbon dioxide. This Drosophila melanogaster (Fruit fly) protein is Odorant receptor 22a (Or22a).